The primary structure comprises 292 residues: [LysW]-aminoadipate kinase (292 aa).

2 residues coordinate substrate: Arg-89 and Asn-193.

This sequence belongs to the acetylglutamate kinase family. LysZ subfamily.

The protein resides in the cytoplasm. It carries out the reaction [amino-group carrier protein]-C-terminal-N-(1,4-dicarboxybutan-1-yl)-L-glutamine + ATP = [amino-group carrier protein]-C-terminal-N-(1-carboxy-5-phosphooxy-5-oxopentan-1-yl)-L-glutamine + ADP. Its pathway is amino-acid biosynthesis; L-lysine biosynthesis via AAA pathway; L-lysine from L-alpha-aminoadipate (Thermus route): step 2/5. Its function is as follows. Catalyzes the phosphorylation of LysW-gamma-alpha-aminoadipate. The sequence is that of [LysW]-aminoadipate kinase from Deinococcus radiodurans (strain ATCC 13939 / DSM 20539 / JCM 16871 / CCUG 27074 / LMG 4051 / NBRC 15346 / NCIMB 9279 / VKM B-1422 / R1).